The primary structure comprises 229 residues: MGNILTCCINSHCGWPRGKDAPCYESDTDIYETVAAATSESTTVEPGKLDVGATEGQDLQHISNQKMPTGPPEDRLSLKFLPSSEEDNDDAKILPSPVQGSSEDNLSLVCLPRSEDDDCDDDDDDDAQILPSRVQGGCYRFDSSSCSSEDNLSLVCLPRSEDDDCDDDDDDAQILPSPVQACSEDSLFLRCSLRHKDEEEEDDDDIHITARIESDLTLESLSDEEIHPG.

Residues 84–106 (SEEDNDDAKILPSPVQGSSEDNL) are disordered.

This Homo sapiens (Human) protein is Aspartate-rich protein 1 (DRICH1).